Reading from the N-terminus, the 370-residue chain is Queuine tRNA-ribosyltransferase (370 aa).

The active-site Proton acceptor is the D93. Residues 93–97, D147, Q189, and G216 each bind substrate; that span reads DSGGF. The RNA binding stretch occupies residues 247–253; the sequence is GVGSPDC. D266 serves as the catalytic Nucleophile. The RNA binding; important for wobble base 34 recognition stretch occupies residues 271 to 275; the sequence is TRIAR. The Zn(2+) site is built by C304, C306, C309, and H335.

This sequence belongs to the queuine tRNA-ribosyltransferase family. Homodimer. Within each dimer, one monomer is responsible for RNA recognition and catalysis, while the other monomer binds to the replacement base PreQ1. Requires Zn(2+) as cofactor.

It carries out the reaction 7-aminomethyl-7-carbaguanine + guanosine(34) in tRNA = 7-aminomethyl-7-carbaguanosine(34) in tRNA + guanine. Its pathway is tRNA modification; tRNA-queuosine biosynthesis. In terms of biological role, catalyzes the base-exchange of a guanine (G) residue with the queuine precursor 7-aminomethyl-7-deazaguanine (PreQ1) at position 34 (anticodon wobble position) in tRNAs with GU(N) anticodons (tRNA-Asp, -Asn, -His and -Tyr). Catalysis occurs through a double-displacement mechanism. The nucleophile active site attacks the C1' of nucleotide 34 to detach the guanine base from the RNA, forming a covalent enzyme-RNA intermediate. The proton acceptor active site deprotonates the incoming PreQ1, allowing a nucleophilic attack on the C1' of the ribose to form the product. After dissociation, two additional enzymatic reactions on the tRNA convert PreQ1 to queuine (Q), resulting in the hypermodified nucleoside queuosine (7-(((4,5-cis-dihydroxy-2-cyclopenten-1-yl)amino)methyl)-7-deazaguanosine). The protein is Queuine tRNA-ribosyltransferase of Pelotomaculum thermopropionicum (strain DSM 13744 / JCM 10971 / SI).